Here is a 90-residue protein sequence, read N- to C-terminus: Small ribosomal subunit protein bS20 (90 aa).

It belongs to the bacterial ribosomal protein bS20 family.

In terms of biological role, binds directly to 16S ribosomal RNA. In Francisella philomiragia subsp. philomiragia (strain ATCC 25017 / CCUG 19701 / FSC 153 / O#319-036), this protein is Small ribosomal subunit protein bS20.